We begin with the raw amino-acid sequence, 213 residues long: FMN-dependent NADH:quinone oxidoreductase 1 (213 aa).

Residue 18–20 (SVS) participates in FMN binding.

The protein belongs to the azoreductase type 1 family. Homodimer. It depends on FMN as a cofactor.

It carries out the reaction 2 a quinone + NADH + H(+) = 2 a 1,4-benzosemiquinone + NAD(+). The catalysed reaction is N,N-dimethyl-1,4-phenylenediamine + anthranilate + 2 NAD(+) = 2-(4-dimethylaminophenyl)diazenylbenzoate + 2 NADH + 2 H(+). Functionally, quinone reductase that provides resistance to thiol-specific stress caused by electrophilic quinones. In terms of biological role, also exhibits azoreductase activity. Catalyzes the reductive cleavage of the azo bond in aromatic azo compounds to the corresponding amines. The sequence is that of FMN-dependent NADH:quinone oxidoreductase 1 from Bacillus cereus (strain ZK / E33L).